A 413-amino-acid chain; its full sequence is Putative competence-damage inducible protein (413 aa).

This sequence belongs to the CinA family.

This is Putative competence-damage inducible protein from Thermoanaerobacter pseudethanolicus (strain ATCC 33223 / 39E) (Clostridium thermohydrosulfuricum).